Consider the following 44-residue polypeptide: Large ribosomal subunit protein bL34 (44 aa).

Basic residues-rich tracts occupy residues 1–14 (MKRT…KRQK) and 31–44 (LSAR…RLAV). The disordered stretch occupies residues 1 to 44 (MKRTLGGTTRKRQKTSGFRARMRTASGRRVLSARRRRGRHRLAV).

The protein belongs to the bacterial ribosomal protein bL34 family.

In Gloeobacter violaceus (strain ATCC 29082 / PCC 7421), this protein is Large ribosomal subunit protein bL34.